The following is a 173-amino-acid chain: Large ribosomal subunit protein uL22c (173 aa).

The protein belongs to the universal ribosomal protein uL22 family. In terms of assembly, part of the 50S ribosomal subunit.

It localises to the plastid. The protein localises to the chloroplast. This protein binds specifically to 23S rRNA. In terms of biological role, the globular domain of the protein is located near the polypeptide exit tunnel on the outside of the subunit, while an extended beta-hairpin is found that lines the wall of the exit tunnel in the center of the 70S ribosome. This is Large ribosomal subunit protein uL22c (rpl22) from Drimys granadensis.